The following is a 336-amino-acid chain: UDP-N-acetylglucosamine--N-acetylmuramyl-(pentapeptide) pyrophosphoryl-undecaprenol N-acetylglucosamine transferase (336 aa).

4 residues coordinate UDP-N-acetyl-alpha-D-glucosamine: N102, R144, S172, and Q264.

This sequence belongs to the glycosyltransferase 28 family. MurG subfamily.

It localises to the cell membrane. It carries out the reaction di-trans,octa-cis-undecaprenyl diphospho-N-acetyl-alpha-D-muramoyl-L-alanyl-D-glutamyl-meso-2,6-diaminopimeloyl-D-alanyl-D-alanine + UDP-N-acetyl-alpha-D-glucosamine = di-trans,octa-cis-undecaprenyl diphospho-[N-acetyl-alpha-D-glucosaminyl-(1-&gt;4)]-N-acetyl-alpha-D-muramoyl-L-alanyl-D-glutamyl-meso-2,6-diaminopimeloyl-D-alanyl-D-alanine + UDP + H(+). It participates in cell wall biogenesis; peptidoglycan biosynthesis. Its function is as follows. Cell wall formation. Catalyzes the transfer of a GlcNAc subunit on undecaprenyl-pyrophosphoryl-MurNAc-pentapeptide (lipid intermediate I) to form undecaprenyl-pyrophosphoryl-MurNAc-(pentapeptide)GlcNAc (lipid intermediate II). The chain is UDP-N-acetylglucosamine--N-acetylmuramyl-(pentapeptide) pyrophosphoryl-undecaprenol N-acetylglucosamine transferase from Rubrobacter xylanophilus (strain DSM 9941 / JCM 11954 / NBRC 16129 / PRD-1).